A 416-amino-acid chain; its full sequence is Enterobactin exporter EntS (416 aa).

Topologically, residues 1–21 (MNKQSWLLNLSLLKTHPAFRA) are cytoplasmic. Residues 22-42 (VFLARFISIVSLGLLGVAVPV) form a helical membrane-spanning segment. Residues 43–55 (QIQMMTHSTWQVG) are Periplasmic-facing. A helical membrane pass occupies residues 56–76 (LSVTLTGGAMFVGLMVGGVLA). Residues 77–83 (DRYERKK) are Cytoplasmic-facing. The chain crosses the membrane as a helical span at residues 84–104 (VILLARGTCGIGFIGLCLNAL). At 105–109 (LPEPS) the chain is on the periplasmic side. The helical transmembrane segment at 110 to 130 (LLAIYLLGLWDGFFASLGVTA) threads the bilayer. Residues 131–156 (LLAATPALVGRENLMQAGAITMLTVR) are Cytoplasmic-facing. A helical transmembrane segment spans residues 157–177 (LGSVISPMIGGLLLATGGVAW). Position 178 (Asn178) is a topological domain, periplasmic. The chain crosses the membrane as a helical span at residues 179-199 (YGLAAAGTFITLLPLLSLPAL). Topologically, residues 200–218 (PPPPQPREHPLKSLLAGFR) are cytoplasmic. The helical transmembrane segment at 219 to 239 (FLLASPLVGGIALLGGLLTMA) threads the bilayer. Residues 240–256 (SAVRVLYPALADNWQMS) are Periplasmic-facing. Residues 257 to 277 (AAQIGFLYAAIPLGAAIGALT) traverse the membrane as a helical segment. The Cytoplasmic segment spans residues 278–287 (SGKLAHSVRP). Residues 288–307 (GLLMLLSTLGAFLAIGLFGL) traverse the membrane as a helical segment. Topologically, residues 308 to 313 (MPMWIL) are periplasmic. The chain crosses the membrane as a helical span at residues 314–336 (GVVCLALFGWLSAVSSLLQYTML). The Cytoplasmic segment spans residues 337 to 356 (QTQTPEAMLGRINGLWTAQN). A helical membrane pass occupies residues 357–377 (VTGDAIGAALLGGLGAMMTPV). A topological domain (periplasmic) is located at residue Ala378. Residues 379–399 (SASASGFGLLIIGVLLLLVLV) traverse the membrane as a helical segment. Residues 400–416 (ELRRFRQTPPQVTASDS) are Cytoplasmic-facing.

This sequence belongs to the major facilitator superfamily. EntS (TC 2.A.1.38) family.

It is found in the cell inner membrane. In terms of biological role, component of an export pathway for enterobactin. The polypeptide is Enterobactin exporter EntS (Escherichia coli O6:H1 (strain CFT073 / ATCC 700928 / UPEC)).